Here is a 120-residue protein sequence, read N- to C-terminus: Glycine cleavage system H protein (120 aa).

The 83-residue stretch at 17–99 (IATVGITAHA…RGAGWFFKLK (83 aa)) folds into the Lipoyl-binding domain. K58 carries the N6-lipoyllysine modification.

This sequence belongs to the GcvH family. The glycine cleavage system is composed of four proteins: P, T, L and H. The cofactor is (R)-lipoate.

Its function is as follows. The glycine cleavage system catalyzes the degradation of glycine. The H protein shuttles the methylamine group of glycine from the P protein to the T protein. The chain is Glycine cleavage system H protein from Allorhizobium ampelinum (strain ATCC BAA-846 / DSM 112012 / S4) (Agrobacterium vitis (strain S4)).